Reading from the N-terminus, the 247-residue chain is GTP cyclohydrolase 1 type 2 homolog (247 aa).

Histidine 63, histidine 64, aspartate 101, histidine 215, and glutamate 219 together coordinate a divalent metal cation.

Belongs to the GTP cyclohydrolase I type 2/NIF3 family. In terms of assembly, homohexamer.

The chain is GTP cyclohydrolase 1 type 2 homolog from Yersinia pestis.